A 299-amino-acid chain; its full sequence is N-acetylmuramic acid 6-phosphate etherase (299 aa).

An SIS domain is found at 54–217; it reads TIAQYKKGGR…STITMVGVGK (164 aa). The Proton donor role is filled by glutamate 82. The active site involves glutamate 113.

Belongs to the GCKR-like family. MurNAc-6-P etherase subfamily. In terms of assembly, homodimer.

It carries out the reaction N-acetyl-D-muramate 6-phosphate + H2O = N-acetyl-D-glucosamine 6-phosphate + (R)-lactate. It functions in the pathway amino-sugar metabolism; N-acetylmuramate degradation. Specifically catalyzes the cleavage of the D-lactyl ether substituent of MurNAc 6-phosphate, producing GlcNAc 6-phosphate and D-lactate. The polypeptide is N-acetylmuramic acid 6-phosphate etherase (Staphylococcus aureus (strain bovine RF122 / ET3-1)).